We begin with the raw amino-acid sequence, 168 residues long: Cell division inhibitor SulA (168 aa).

The ftsZ binding stretch occupies residues 106 to 112 (ALLTGNY). The tract at residues 161-168 (KIHSSLYH) is lon protease binding.

It belongs to the SulA family. Interacts with FtsZ. Post-translationally, is rapidly cleaved and degraded by the Lon protease once DNA damage is repaired.

In terms of biological role, component of the SOS system and an inhibitor of cell division. Accumulation of SulA causes rapid cessation of cell division and the appearance of long, non-septate filaments. In the presence of GTP, binds a polymerization-competent form of FtsZ in a 1:1 ratio, thus inhibiting FtsZ polymerization and therefore preventing it from participating in the assembly of the Z ring. This mechanism prevents the premature segregation of damaged DNA to daughter cells during cell division. This chain is Cell division inhibitor SulA, found in Serratia proteamaculans (strain 568).